The sequence spans 101 residues: Large ribosomal subunit protein uL24c (101 aa).

This sequence belongs to the universal ribosomal protein uL24 family. Part of the 50S ribosomal subunit.

Its subcellular location is the plastid. The protein resides in the chloroplast. Functionally, one of two assembly initiator proteins, it binds directly to the 5'-end of the 23S rRNA, where it nucleates assembly of the 50S subunit. This chain is Large ribosomal subunit protein uL24c (rpl24), found in Guillardia theta (Cryptophyte).